A 363-amino-acid chain; its full sequence is UDP-N-acetylglucosamine--N-acetylmuramyl-(pentapeptide) pyrophosphoryl-undecaprenol N-acetylglucosamine transferase (363 aa).

UDP-N-acetyl-alpha-D-glucosamine contacts are provided by residues 10–12 (TGG), asparagine 124, serine 195, isoleucine 250, and glutamine 295.

This sequence belongs to the glycosyltransferase 28 family. MurG subfamily.

It is found in the cell membrane. The enzyme catalyses di-trans,octa-cis-undecaprenyl diphospho-N-acetyl-alpha-D-muramoyl-L-alanyl-D-glutamyl-meso-2,6-diaminopimeloyl-D-alanyl-D-alanine + UDP-N-acetyl-alpha-D-glucosamine = di-trans,octa-cis-undecaprenyl diphospho-[N-acetyl-alpha-D-glucosaminyl-(1-&gt;4)]-N-acetyl-alpha-D-muramoyl-L-alanyl-D-glutamyl-meso-2,6-diaminopimeloyl-D-alanyl-D-alanine + UDP + H(+). The protein operates within cell wall biogenesis; peptidoglycan biosynthesis. Functionally, cell wall formation. Catalyzes the transfer of a GlcNAc subunit on undecaprenyl-pyrophosphoryl-MurNAc-pentapeptide (lipid intermediate I) to form undecaprenyl-pyrophosphoryl-MurNAc-(pentapeptide)GlcNAc (lipid intermediate II). This chain is UDP-N-acetylglucosamine--N-acetylmuramyl-(pentapeptide) pyrophosphoryl-undecaprenol N-acetylglucosamine transferase, found in Listeria welshimeri serovar 6b (strain ATCC 35897 / DSM 20650 / CCUG 15529 / CIP 8149 / NCTC 11857 / SLCC 5334 / V8).